A 441-amino-acid polypeptide reads, in one-letter code: MSERSDLLHFKFENYGDSMLQKMNKLREENKFCDVTVLIDDIEVQGHKIVFAAGSPFLRDQFLLNDSREVKISILQSSEVGRQLLLSCYSGVLEFPEMELVNYLTAASFLQMSHIVERCTQALWKFIKPKQPMDSKEGCEPQSASPQSKEQQGDARGSPKQDSPCIHPSEDSMDMEDSDIQIVKVESIGDVSEVRSKKDQNQFISSEPTALHSSEPQHSLINSTVENRVSEIEQNHLHNYALSYTGSDNIIMASKDVFGPNIRGVDKGLQWHHQCPKCTRVFRHLENYANHLKMHKLFMCLLCGKTFTQKGNLHRHMRVHAGIKPFQCKICGKTFSQKCSLQDHLNLHSGDKPHKCNYCDMVFAHKPVLRKHLKQLHGKNSFDNANERNVQDLTVDFDSFACTTVTDSKGCQPQPDATQVLDAGKLAQAVLNLRNDSTCVN.

Residues 33–97 form the BTB domain; that stretch reads CDVTVLIDDI…CYSGVLEFPE (65 aa). The disordered stretch occupies residues 134 to 177; sequence DSKEGCEPQSASPQSKEQQGDARGSPKQDSPCIHPSEDSMDMED. Lys-184 participates in a covalent cross-link: Glycyl lysine isopeptide (Lys-Gly) (interchain with G-Cter in SUMO2). The disordered stretch occupies residues 194–216; that stretch reads VRSKKDQNQFISSEPTALHSSEP. Positions 201 to 216 are enriched in polar residues; it reads NQFISSEPTALHSSEP. Lys-255 participates in a covalent cross-link: Glycyl lysine isopeptide (Lys-Gly) (interchain with G-Cter in SUMO2). C2H2-type zinc fingers lie at residues 273-295, 298-320, 326-348, and 354-377; these read HQCPKCTRVFRHLENYANHLKMH, FMCLLCGKTFTQKGNLHRHMRVH, FQCKICGKTFSQKCSLQDHLNLH, and HKCNYCDMVFAHKPVLRKHLKQLH. Residue Lys-329 forms a Glycyl lysine isopeptide (Lys-Gly) (interchain with G-Cter in SUMO2) linkage.

As to expression, ubiquitous.

The protein localises to the nucleus. Its function is as follows. May be involved in transcriptional regulation. The protein is Zinc finger and BTB domain-containing protein 26 (ZBTB26) of Homo sapiens (Human).